A 238-amino-acid chain; its full sequence is tRNA (guanine-N(7)-)-methyltransferase (238 aa).

Positions 1-12 (MTDTAENQTPND) are enriched in polar residues. Residues 1-20 (MTDTAENQTPNDRQAGHPRS) form a disordered region. Residues Glu70, Asp95, Asp122, and Asp145 each contribute to the S-adenosyl-L-methionine site. Residue Asp145 is part of the active site. Residues Lys149, Asp181, and 216–219 (TKFE) each bind substrate.

This sequence belongs to the class I-like SAM-binding methyltransferase superfamily. TrmB family.

It carries out the reaction guanosine(46) in tRNA + S-adenosyl-L-methionine = N(7)-methylguanosine(46) in tRNA + S-adenosyl-L-homocysteine. The protein operates within tRNA modification; N(7)-methylguanine-tRNA biosynthesis. Functionally, catalyzes the formation of N(7)-methylguanine at position 46 (m7G46) in tRNA. The chain is tRNA (guanine-N(7)-)-methyltransferase from Neisseria gonorrhoeae (strain NCCP11945).